A 1343-amino-acid polypeptide reads, in one-letter code: MESRALLAVALWFCVETRAASVGLPGDSLHPPKLSTQKDILTILANTTLQITCRGQRDLDWLWPNTPRDSEERVLVTECGDSIFCKTLTVPRVVGNDTGAYKCFYRDTDVSSIVYVYVQDHRSPFIASVSDEHGIVYITENKNKTVVIPCRGSISNLNVSLCARYPEKRFVPDGNRISWDSEKGFTIPSYMISYAGMVFCEAKINDETYQSIMYIVLVVGYRIYDVVLSPPHEIELSAGEKLVLNCTARTELNVGLDFSWQFPSSKHQHKKIVNRDVKSLPGTVAKMFLSTLTIDSVTKSDQGEYTCTAYSGLMTKKNKTFVRVHTKPFIAFGSGMKSLVEATVGSQVRIPVKYLSYPAPDIKWYRNGRPIESNYTMIVGDELTIMEVSERDAGNYTVILTNPISMEKQSHMVSLVVNVPPQIGEKALISPMDSYQYGTMQTLTCTVYANPPLHHIQWYWQLEEACSYRPSQTNPYTCKEWRHVKDFQGGNKIEVTKNQYALIEGKNKTVSTLVIQAAYVSALYKCEAINKAGRGERVISFHVIRGPEITVQPATQPTERESMSLLCTADRNTFENLTWYKLGSQATSVHMGESLTPVCKNLDALWKLNGTVFSNSTNDILIVAFQNASLQDQGNYVCSAQDKKTKKRHCLVKQLVILERMAPMITGNLENQTTTIGETIEVVCPTSGNPTPLITWFKDNETLVEDSGIVLKDGNRNLTIRRVRKEDGGLYTCQACNVLGCARAETLFIIEGVQEKTNLEVIILVGTAVIAMFFWLLLVILVRTVKRANEGELKTGYLSIVMDPDELPLDERCERLPYDASKWEFPRDRLKLGKPLGRGAFGQVIEADAFGIDKTATCKTVAVKMLKEGATHSEHRALMSELKILIHIGHHLNVVNLLGACTKPGGPLMVIVEFCKFGNLSTYLRGKRNEFVPYKSKGARFRSGKDYVGELSVDLKRRLDSITSSQSSASSGFVEEKSLSDVEEEEASEELYKDFLTLEHLICYSFQVAKGMEFLASRKCIHRDLAARNILLSEKNVVKICDFGLARDIYKDPDYVRKGDPRLPLKWMAPETIFDRIYTIQSGVWSFGVLLWEIFSLGASPYPGVKIDEKFCRRLKEGTRMRAPDYTTPEMYQTMLDCWHEDPNQRPAFSELVEHLGNLLQANAQQDGKDYIVLPMSETLSMEEDSGLSLPTSPVSCMEEEEVCDPKFHYDNTAGISHYLQNSKRKSRPVSVKTFEDIPLEEPEVKVIPDDSQTDSGMVLASEELKTLEDRNKLSPSFGGMMPSKSRESVASEGSNQTSGYQSGYHSDDTDTTVYSSDEAGLLKLVDVAGHVDSGTTLRSSPV.

The first 19 residues, 1–19 (MESRALLAVALWFCVETRA), serve as a signal peptide directing secretion. Residues 20–760 (ASVGLPGDSL…EGVQEKTNLE (741 aa)) are Extracellular-facing. N-linked (GlcNAc...) asparagine glycans are attached at residues asparagine 46, asparagine 96, asparagine 143, asparagine 158, and asparagine 245. Ig-like C2-type domains are found at residues 46 to 109 (NTTL…RDTD), 141 to 207 (NKNK…INDE), 224 to 320 (YDVV…KNKT), 328 to 414 (PFIA…HMVS), 421 to 540 (PQIG…RVIS), 547 to 654 (PEIT…LVKQ), and 663 to 749 (PMIT…TLFI). A disulfide bridge connects residues cysteine 53 and cysteine 103. A disulfide bridge connects residues cysteine 150 and cysteine 200. Cysteine 246 and cysteine 307 form a disulfide bridge. Residues asparagine 318, asparagine 374, asparagine 395, asparagine 507, asparagine 576, asparagine 609, asparagine 615, asparagine 627, asparagine 671, asparagine 700, and asparagine 717 are each glycosylated (N-linked (GlcNAc...) asparagine). 2 cysteine pairs are disulfide-bonded: cysteine 445–cysteine 526 and cysteine 567–cysteine 638. The cysteines at positions 684 and 733 are disulfide-linked. A helical transmembrane segment spans residues 761 to 781 (VIILVGTAVIAMFFWLLLVIL). The Cytoplasmic portion of the chain corresponds to 782–1343 (VRTVKRANEG…SGTTLRSSPV (562 aa)). At tyrosine 797 the chain carries Phosphotyrosine. One can recognise a Protein kinase domain in the interval 830–1158 (LKLGKPLGRG…FSELVEHLGN (329 aa)). ATP is bound by residues 836–844 (LGRGAFGQV) and lysine 864. Tyrosine 947 is subject to Phosphotyrosine; by autocatalysis. 2 positions are modified to phosphoserine: serine 978 and serine 980. Tyrosine 992 is modified (phosphotyrosine; by autocatalysis). A disulfide bridge connects residues cysteine 1020 and cysteine 1041. The active-site Proton acceptor is aspartate 1024. A phosphotyrosine; by autocatalysis mark is found at tyrosine 1050, tyrosine 1055, tyrosine 1171, and tyrosine 1210. Residues serine 1227 and serine 1231 each carry the phosphoserine modification. Threonine 1234 bears the Phosphothreonine mark. Residues 1267–1314 (TLEDRNKLSPSFGGMMPSKSRESVASEGSNQTSGYQSGYHSDDTDTTV) form a disordered region. Residues 1292-1305 (SEGSNQTSGYQSGY) are compositionally biased toward polar residues. Residues tyrosine 1301, tyrosine 1305, and tyrosine 1315 each carry the phosphotyrosine; by autocatalysis modification.

The protein belongs to the protein kinase superfamily. Tyr protein kinase family. CSF-1/PDGF receptor subfamily. In terms of assembly, homodimer in the presence of bound dimeric VEGFA, VEGFC or VEGFD ligands; monomeric in the absence of bound ligands. Can also form heterodimers with FLT1/VEGFR1 and KDR/VEGFR2. Interacts (tyrosine phosphorylated) with LFYN, NCK1, PLCG1. Interacts (tyrosine-phosphorylated active form preferentially) with DAB2IP (via C2 domain and active form preferentially); the interaction occurs at the late phase of VEGFA response and inhibits KDR/VEGFR2 activity. Interacts with SHBSH2D2A/TSAD, GRB2, MYOF, CBL and PDCD6. Interacts (via C-terminus domain) with ERN1 (via kinase domain); the interaction is facilitated in a XBP1- and vascular endothelial growth factor (VEGF)-dependent manner in endothelial cells. Interacts (via juxtamembrane region) with chaperone PDCL3 (via thioredoxin fold region); the interaction leads to increased KDR/VEGFR2 abundance through inhibition of its ubiquitination and degradation. Interacts (tyrosine phosphorylated) with CCDC88A/GIV (via SH2-like region); binding requires autophosphorylation of the KDR/VEGFR2 C-terminal region. Interacts with isoform 2 of BSG. Interacts with SLC31A1; this interaction is induced upon VEGFA stimulation leading to SLC31A1 and KDR subsequent co-internalization to early endosomes, thereby activating KDR downstream signaling in endothelial cells. N-glycosylated. Post-translationally, ubiquitinated. Tyrosine phosphorylation of the receptor promotes its poly-ubiquitination, leading to its degradation via the proteasome or lysosomal proteases. In terms of processing, autophosphorylated on tyrosine residues upon ligand binding. Autophosphorylation occurs in trans, i.e. one subunit of the dimeric receptor phosphorylates tyrosine residues on the other subunit. Phosphorylation at Tyr-947 is important for interaction with SH2D2A/TSAD and VEGFA-mediated reorganization of the actin cytoskeleton. Phosphorylation at Tyr-1171 is important for interaction with PLCG1 and SHB. Phosphorylation at Tyr-1210 is important for interaction with NCK1 and FYN. Dephosphorylated by PTPRB. Dephosphorylated by PTPRJ at Tyr-797, Tyr-947, Tyr-992, Tyr-1050, Tyr-1055, Tyr-1171 and Tyr-1210. The inhibitory disulfide bond between Cys-1020 and Cys-1041 may serve as a specific molecular switch for H(2)S-induced modification that regulates KDR/VEGFR2 function. As to expression, expressed in the post-pubertal mammary glands.

The protein localises to the cell membrane. The protein resides in the cytoplasm. It localises to the nucleus. It is found in the cytoplasmic vesicle. Its subcellular location is the early endosome. The protein localises to the cell junction. The protein resides in the endoplasmic reticulum. It catalyses the reaction L-tyrosyl-[protein] + ATP = O-phospho-L-tyrosyl-[protein] + ADP + H(+). With respect to regulation, present in an inactive conformation in the absence of bound ligand. Binding of VEGFA, VEGFC or VEGFD leads to dimerization and activation by autophosphorylation on tyrosine residues. May be regulated by hydrogen sulfide (H(2)S) levels via a sensitive intracellular disulfide bond. Functionally, tyrosine-protein kinase that acts as a cell-surface receptor for VEGFA, VEGFC and VEGFD. Plays an essential role in the regulation of angiogenesis, vascular development, vascular permeability, and embryonic hematopoiesis. Promotes proliferation, survival, migration and differentiation of endothelial cells. Promotes reorganization of the actin cytoskeleton. Isoforms lacking a transmembrane domain may function as decoy receptors for VEGFA, VEGFC and/or VEGFD. Modulates FLT1 and FLT4 signaling by forming heterodimers. Binding of vascular growth factors to isoform 1 leads to the activation of several signaling cascades. Activation of PLCG1 leads to the production of the cellular signaling molecules diacylglycerol and inositol-1,4,5-trisphosphate and the activation of protein kinase C. Mediates activation of MAPK1/ERK2, MAPK3/ERK1 and the MAP kinase signaling pathway, as well as of the AKT1 signaling pathway. Mediates phosphorylation of PIK3R1, the regulatory subunit of phosphatidylinositol 3-kinase, reorganization of the actin cytoskeleton and activation of PTK2/FAK1. Required for VEGFA-mediated induction of NOS2 and NOS3, leading to the production of the signaling molecule nitric oxide (NO) by endothelial cells. Phosphorylates PLCG1. Promotes phosphorylation of FYN, NCK1, NOS3, PIK3R1, PTK2/FAK1 and SRC. The protein is Vascular endothelial growth factor receptor 2 of Rattus norvegicus (Rat).